A 63-amino-acid polypeptide reads, in one-letter code: Cecropin-1/3 (63 aa).

A signal peptide spans 1-23; it reads MNFYKVFIFVALILAISLGQSEA. An Arginine amide modification is found at R62.

It belongs to the cecropin family.

Its subcellular location is the secreted. Functionally, cecropins have lytic and antibacterial activity against several Gram-positive and Gram-negative bacteria. This Drosophila virilis (Fruit fly) protein is Cecropin-1/3 (Cec1).